We begin with the raw amino-acid sequence, 544 residues long: Methionine--tRNA ligase (544 aa).

The 'HIGH' region motif lies at 10–20; that stretch reads PYANGSLHLGH. 4 residues coordinate Zn(2+): cysteine 141, cysteine 144, cysteine 153, and cysteine 156. Residues 329–333 carry the 'KMSKS' region motif; that stretch reads KLSTS. ATP is bound at residue threonine 332.

The protein belongs to the class-I aminoacyl-tRNA synthetase family. MetG type 1 subfamily. Monomer. Zn(2+) serves as cofactor.

Its subcellular location is the cytoplasm. The catalysed reaction is tRNA(Met) + L-methionine + ATP = L-methionyl-tRNA(Met) + AMP + diphosphate. Is required not only for elongation of protein synthesis but also for the initiation of all mRNA translation through initiator tRNA(fMet) aminoacylation. This chain is Methionine--tRNA ligase, found in Bacillus cereus (strain Q1).